Consider the following 423-residue polypeptide: Histidine--tRNA ligase (423 aa).

This sequence belongs to the class-II aminoacyl-tRNA synthetase family. As to quaternary structure, homodimer.

It localises to the cytoplasm. The enzyme catalyses tRNA(His) + L-histidine + ATP = L-histidyl-tRNA(His) + AMP + diphosphate + H(+). This chain is Histidine--tRNA ligase, found in Desulfosudis oleivorans (strain DSM 6200 / JCM 39069 / Hxd3) (Desulfococcus oleovorans).